Consider the following 359-residue polypeptide: Peroxisome assembly protein 12 (359 aa).

Residues 1-24 are Peroxisomal matrix-facing; it reads MSTTIRASQLASSISPKTEEKQPS. A helical membrane pass occupies residues 25-52; the sequence is VFDIIAQENLATSIRPALQHLVKYLAFF. The Cytoplasmic portion of the chain corresponds to 53-56; the sequence is KPKT. The helical transmembrane segment at 57–81 threads the bilayer; sequence FLSVHRNFDEYYIIFDLILQNHYLR. Residues 82–106 lie on the Peroxisomal matrix side of the membrane; sequence NYGASFTENFYSMKRIASGTGNPPN. Residues 107–128 form a helical membrane-spanning segment; that stretch reads DGRERIMSLITLVGWPYVENKL. Over 129-133 the chain is Cytoplasmic; sequence NQLYD. Residues 134–184 traverse the membrane as a helical segment; sequence RLKEVYECRSWSSINGMKAKCQKMFVIIWPYIKTALKAVKSALQLAYILNR. The Peroxisomal matrix portion of the chain corresponds to 185–253; the sequence is SSIHSPWLYF…ILGLPGIVSR (69 aa). A helical transmembrane segment spans residues 254–281; it reads LFAYGLFFVQFLDYMYNTDLAKLTKTGL. The Cytoplasmic segment spans residues 282–359; the sequence is DGAIPSPPHK…NVQHLIRLFV (78 aa). The Zn(2+) site is built by cysteine 307, cysteine 310, cysteine 328, and cysteine 331. The RING-type; degenerate zinc-finger motif lies at 307 to 346; sequence CPICLKKRVNDTALFVSGYVFCYTCINQYVNTYNKCPVTG.

Belongs to the pex2/pex10/pex12 family. As to quaternary structure, component of the PEX2-PEX10-PEX12 retrotranslocation channel.

Its subcellular location is the peroxisome membrane. The protein operates within protein modification; protein ubiquitination. Component of a retrotranslocation channel required for peroxisome organization by mediating export of the PEX5/prx-5 receptor from peroxisomes to the cytosol, thereby promoting PEX5/prx-5 recycling. The retrotranslocation channel is composed of PEX2/prx-2, PEX10/prx-10 and PEX12/prx-12; each subunit contributing transmembrane segments that coassemble into an open channel that specifically allows the passage of PEX5/prx-5 through the peroxisomal membrane. PEX12/prx-12 also regulates PEX5/prx-5 recycling by activating the E3 ubiquitin-protein ligase activity of PEX10/prx-10. When PEX5 recycling is compromised, PEX12/prx-12 stimulates PEX10-mediated polyubiquitination of PEX5/prx-5, leading to its subsequent degradation. The protein is Peroxisome assembly protein 12 (prx-12) of Caenorhabditis elegans.